A 1040-amino-acid chain; its full sequence is Contactin-2 (1040 aa).

The N-terminal stretch at 1–30 (MGTATRRKPHLLLVAAVALVSSSAWSSALG) is a signal peptide. Ig-like C2-type domains lie at 43–128 (PLSV…AILR), 133–222 (QEFS…SVFS), 239–322 (PSIK…GRII), 327–411 (PEWL…AELA), 417–504 (PDFR…GILS), and 509–603 (TKIT…ATVL). 4 disulfide bridges follow: Cys61–Cys111, Cys155–Cys207, Cys261–Cys306, and Cys348–Cys395. N-linked (GlcNAc...) asparagine glycosylation is found at Asn76, Asn198, and Asn204. 4 N-linked (GlcNAc...) asparagine glycosylation sites follow: Asn461, Asn477, Asn498, and Asn525. Fibronectin type-III domains follow at residues 610 to 708 (PPGG…TREA), 713 to 810 (APSG…SAEE), 815 to 910 (APTK…TMKP), and 915 to 1006 (PPGN…NGGT). Positions 694-720 (GEPSGPSSKIRTREAAPSVAPSGLSGG) are disordered. A Cell attachment site motif is present at residues 794–796 (RGD). Residues Asn830, Asn904, Asn918, and Asn940 are each glycosylated (N-linked (GlcNAc...) asparagine). The segment at 894–919 (AGTGPASPSANATTMKPPPRRPPGNI) is disordered. Asn1012 carries the GPI-anchor amidated asparagine lipid modification. A propeptide spans 1013–1040 (MAVRPAPHPGTVISHSVAMLILIGSLEL) (removed in mature form).

The protein belongs to the immunoglobulin superfamily. Contactin family.

It is found in the cell membrane. In terms of biological role, in conjunction with another transmembrane protein, CNTNAP2, contributes to the organization of axonal domains at nodes of Ranvier by maintaining voltage-gated potassium channels at the juxtaparanodal region. May be involved in cell adhesion. This Homo sapiens (Human) protein is Contactin-2 (CNTN2).